Consider the following 59-residue polypeptide: Large ribosomal subunit protein uL30 (59 aa).

This sequence belongs to the universal ribosomal protein uL30 family. In terms of assembly, part of the 50S ribosomal subunit.

This Staphylococcus saprophyticus subsp. saprophyticus (strain ATCC 15305 / DSM 20229 / NCIMB 8711 / NCTC 7292 / S-41) protein is Large ribosomal subunit protein uL30.